The following is a 625-amino-acid chain: DNA mismatch repair protein MutL (625 aa).

Belongs to the DNA mismatch repair MutL/HexB family.

Functionally, this protein is involved in the repair of mismatches in DNA. It is required for dam-dependent methyl-directed DNA mismatch repair. May act as a 'molecular matchmaker', a protein that promotes the formation of a stable complex between two or more DNA-binding proteins in an ATP-dependent manner without itself being part of a final effector complex. The protein is DNA mismatch repair protein MutL of Azorhizobium caulinodans (strain ATCC 43989 / DSM 5975 / JCM 20966 / LMG 6465 / NBRC 14845 / NCIMB 13405 / ORS 571).